We begin with the raw amino-acid sequence, 131 residues long: Holo-[acyl-carrier-protein] synthase (131 aa).

Aspartate 8 and glutamate 63 together coordinate Mg(2+).

Belongs to the P-Pant transferase superfamily. AcpS family. It depends on Mg(2+) as a cofactor.

It is found in the cytoplasm. The enzyme catalyses apo-[ACP] + CoA = holo-[ACP] + adenosine 3',5'-bisphosphate + H(+). Transfers the 4'-phosphopantetheine moiety from coenzyme A to a Ser of acyl-carrier-protein. The chain is Holo-[acyl-carrier-protein] synthase from Shewanella piezotolerans (strain WP3 / JCM 13877).